The chain runs to 316 residues: Succinoglycan biosynthesis protein ExoV (316 aa).

It participates in glycan metabolism; exopolysaccharide biosynthesis. The chain is Succinoglycan biosynthesis protein ExoV (exoV) from Rhizobium meliloti (strain 1021) (Ensifer meliloti).